Reading from the N-terminus, the 431-residue chain is Glutamate-1-semialdehyde 2,1-aminomutase (431 aa).

An N6-(pyridoxal phosphate)lysine modification is found at K265.

It belongs to the class-III pyridoxal-phosphate-dependent aminotransferase family. HemL subfamily. Homodimer. It depends on pyridoxal 5'-phosphate as a cofactor.

The protein resides in the cytoplasm. The enzyme catalyses (S)-4-amino-5-oxopentanoate = 5-aminolevulinate. It functions in the pathway porphyrin-containing compound metabolism; protoporphyrin-IX biosynthesis; 5-aminolevulinate from L-glutamyl-tRNA(Glu): step 2/2. In Vibrio vulnificus (strain YJ016), this protein is Glutamate-1-semialdehyde 2,1-aminomutase.